Consider the following 690-residue polypeptide: Methionine--tRNA ligase (690 aa).

Residues 12–22 carry the 'HIGH' region motif; the sequence is PYANGSIHLGH. Zn(2+) is bound by residues Cys-143, Cys-146, Cys-156, and Cys-159. Residues 328–332 carry the 'KMSKS' region motif; that stretch reads KMSKS. Lys-331 serves as a coordination point for ATP. The tRNA-binding domain maps to 582-690; the sequence is DFAKVDLRIA…SGAEPGMKVK (109 aa).

The protein belongs to the class-I aminoacyl-tRNA synthetase family. MetG type 1 subfamily. In terms of assembly, homodimer. Zn(2+) serves as cofactor.

It is found in the cytoplasm. The catalysed reaction is tRNA(Met) + L-methionine + ATP = L-methionyl-tRNA(Met) + AMP + diphosphate. Functionally, is required not only for elongation of protein synthesis but also for the initiation of all mRNA translation through initiator tRNA(fMet) aminoacylation. This is Methionine--tRNA ligase from Thiobacillus denitrificans (strain ATCC 25259 / T1).